A 380-amino-acid chain; its full sequence is Cytochrome b (380 aa).

The next 4 membrane-spanning stretches (helical) occupy residues 34–54 (FGSL…LLAA), 78–99 (WLIR…YLHI), 114–134 (WNTG…GYVL), and 179–199 (FFTL…IHLT). Residues H84 and H98 each coordinate heme b. Heme b-binding residues include H183 and H197. H202 serves as a coordination point for a ubiquinone. 4 helical membrane passes run 227 to 247 (TKDI…ALFS), 289 to 309 (LGGV…PLLH), 321 to 341 (LSQL…WIGS), and 348 to 368 (FIII…ILFP).

This sequence belongs to the cytochrome b family. In terms of assembly, the cytochrome bc1 complex contains 11 subunits: 3 respiratory subunits (MT-CYB, CYC1 and UQCRFS1), 2 core proteins (UQCRC1 and UQCRC2) and 6 low-molecular weight proteins (UQCRH/QCR6, UQCRB/QCR7, UQCRQ/QCR8, UQCR10/QCR9, UQCR11/QCR10 and a cleavage product of UQCRFS1). This cytochrome bc1 complex then forms a dimer. Heme b serves as cofactor.

Its subcellular location is the mitochondrion inner membrane. Component of the ubiquinol-cytochrome c reductase complex (complex III or cytochrome b-c1 complex) that is part of the mitochondrial respiratory chain. The b-c1 complex mediates electron transfer from ubiquinol to cytochrome c. Contributes to the generation of a proton gradient across the mitochondrial membrane that is then used for ATP synthesis. The chain is Cytochrome b (MT-CYB) from Eudyptes chrysolophus (Macaroni penguin).